A 119-amino-acid polypeptide reads, in one-letter code: uncharacterized protein (119 aa).

An N-terminal signal peptide occupies residues 1–26; sequence MNKLKRLSMLTVMIASVFIFSSHALA. Residues 30–104 form the SH3b domain; the sequence is YTVSTSSGAP…IVPGFVSDTY (75 aa).

To B.subtilis YraJ.

This is an uncharacterized protein from Bacillus subtilis (strain 168).